Reading from the N-terminus, the 557-residue chain is Formate--tetrahydrofolate ligase 2 (557 aa).

Residue 66–73 (TPAGEGKT) participates in ATP binding.

The protein belongs to the formate--tetrahydrofolate ligase family.

It catalyses the reaction (6S)-5,6,7,8-tetrahydrofolate + formate + ATP = (6R)-10-formyltetrahydrofolate + ADP + phosphate. Its pathway is one-carbon metabolism; tetrahydrofolate interconversion. The protein is Formate--tetrahydrofolate ligase 2 of Streptococcus pyogenes serotype M6 (strain ATCC BAA-946 / MGAS10394).